The primary structure comprises 500 residues: ADP,ATP carrier protein 5 (500 aa).

11 helical membrane-spanning segments follow: residues 21–41 (IYNYELGKFIPMSALMFCILF), 62–82 (IAGFAKVYCVTPAAALFVIIY), 94–114 (IFYYLTAFFIGFFVLFAFVIY), 149–169 (YIVYYSLAELWPNIFYVLLFW), 184–204 (FYTLFSLFGNSSLILVGFLMM), 224–244 (ITLVQISTILVTIVAVICCLL), 287–307 (LWLLLICSAAFGFAINLVEAV), 328–348 (LYILWTGVAIMVMTIIGNNVM), 357–377 (AVISPVIIMVTGVLFFVLIVF), 381–401 (ILSLFDGAILMSPLALAVSIG), and 469–489 (SISPVLMVVFTFVCLAWIYAV).

The protein belongs to the ADP/ATP translocase tlc family.

Its subcellular location is the cell membrane. Functionally, provides the rickettsial cell with host ATP in exchange for rickettsial ADP. This is an obligate exchange system. This energy acquiring activity is an important component of rickettsial parasitism. The protein is ADP,ATP carrier protein 5 (tlcE) of Rickettsia bellii (strain RML369-C).